The chain runs to 511 residues: Glucose-1-phosphate adenylyltransferase large subunit 1, chloroplastic/amyloplastic (511 aa).

The N-terminal 58 residues, 1–58 (MAAMDLRVAAPASVAAAARCGTSLARPWPARAVGGGGGGGGRGRRLSVRTSVATTEAA), are a transit peptide targeting the chloroplast.

Belongs to the bacterial/plant glucose-1-phosphate adenylyltransferase family. Heterotetramer composed of two small and two large subunits. Expressed in leaves and stems.

It is found in the plastid. It localises to the chloroplast. The protein resides in the amyloplast. The catalysed reaction is alpha-D-glucose 1-phosphate + ATP + H(+) = ADP-alpha-D-glucose + diphosphate. It participates in glycan biosynthesis; starch biosynthesis. Activated by 3'phosphoglycerate, inhibited by orthophosphate. Allosteric regulation. In terms of biological role, involved in synthesis of starch. Catalyzes the synthesis of ADP-glucose, a molecule that serves as an activated glycosyl donor for alpha-1,4-glucan synthesis. Essential for starch synthesis in leaf chloroplasts and endosperm amyloplasts. This Oryza sativa subsp. japonica (Rice) protein is Glucose-1-phosphate adenylyltransferase large subunit 1, chloroplastic/amyloplastic.